We begin with the raw amino-acid sequence, 455 residues long: Fumarate hydratase class II (455 aa).

Substrate-binding positions include 96 to 98 (SGT), 122 to 125 (HPND), 132 to 134 (SSN), and threonine 180. Histidine 181 functions as the Proton donor/acceptor in the catalytic mechanism. The active site involves serine 311. Substrate contacts are provided by residues serine 312 and 317-319 (KVN).

The protein belongs to the class-II fumarase/aspartase family. Fumarase subfamily. In terms of assembly, homotetramer.

It localises to the cytoplasm. It catalyses the reaction (S)-malate = fumarate + H2O. It functions in the pathway carbohydrate metabolism; tricarboxylic acid cycle; (S)-malate from fumarate: step 1/1. Functionally, involved in the TCA cycle. Catalyzes the stereospecific interconversion of fumarate to L-malate. The polypeptide is Fumarate hydratase class II (Listeria monocytogenes serotype 4b (strain F2365)).